We begin with the raw amino-acid sequence, 578 residues long: MKASRFFIGTLKEAPADAEIVSHKLMVRAGMIRRVAGGIYNYLPVGLRSIRKVEAIVREEMNRAGAIELLMPAVQPAELWQESGRWEQYGPELLRFKDRKDNDFVIGPTHEEVVTDIARNQIKSYRQMPVNFYQIQTKFRDEIRPRFGVMRGREFIMKDAYSFDKDTAGLNESYRKMYDAYVRIFTRLGLEFRAVAADSGSIGGNFSHEFHVIADTGEDAIAYCPTSDFAANIEAAEALPLIAARAAPAEAMEKVATPGKAKCEAVAELLAIPLERTIKSIVLATENEGAEPTIWLIMLRGDHDLNEIKVSKLPGLKNHRFATEQEIVDWFGTPPGYLGPVGTKKPVKVIADRTVANMSDFVVGANEVDYHIAGVNWGRDLPEPEVADVRDVKKGDPSPDGKGTIDICRGIEVGHVFQLGTKYSEAMGATFLDESGKPQPMLMGCYGVGVTRILGAAIEQNFDDRGIIWPESIAPFEVVLCPMGYDRSDMVREAADKLYAELAAAGIDVILDDRGERPGVMFADWELIGVPHRLVIGERGLKEGKIEYQGRRDAEATLLPADEAAATVTEKIRAALAH.

It belongs to the class-II aminoacyl-tRNA synthetase family. ProS type 1 subfamily. In terms of assembly, homodimer.

Its subcellular location is the cytoplasm. The enzyme catalyses tRNA(Pro) + L-proline + ATP = L-prolyl-tRNA(Pro) + AMP + diphosphate. Its function is as follows. Catalyzes the attachment of proline to tRNA(Pro) in a two-step reaction: proline is first activated by ATP to form Pro-AMP and then transferred to the acceptor end of tRNA(Pro). As ProRS can inadvertently accommodate and process non-cognate amino acids such as alanine and cysteine, to avoid such errors it has two additional distinct editing activities against alanine. One activity is designated as 'pretransfer' editing and involves the tRNA(Pro)-independent hydrolysis of activated Ala-AMP. The other activity is designated 'posttransfer' editing and involves deacylation of mischarged Ala-tRNA(Pro). The misacylated Cys-tRNA(Pro) is not edited by ProRS. This is Proline--tRNA ligase from Burkholderia ambifaria (strain MC40-6).